The sequence spans 156 residues: Small ribosomal subunit protein uS7 (156 aa).

This sequence belongs to the universal ribosomal protein uS7 family. As to quaternary structure, part of the 30S ribosomal subunit. Contacts proteins S9 and S11.

In terms of biological role, one of the primary rRNA binding proteins, it binds directly to 16S rRNA where it nucleates assembly of the head domain of the 30S subunit. Is located at the subunit interface close to the decoding center, probably blocks exit of the E-site tRNA. The polypeptide is Small ribosomal subunit protein uS7 (Sphingopyxis alaskensis (strain DSM 13593 / LMG 18877 / RB2256) (Sphingomonas alaskensis)).